The primary structure comprises 643 residues: 1-deoxy-D-xylulose-5-phosphate synthase (643 aa).

Residues histidine 78 and 119-121 (AHS) each bind thiamine diphosphate. Aspartate 150 provides a ligand contact to Mg(2+). Thiamine diphosphate is bound by residues 151 to 152 (GA), asparagine 179, tyrosine 288, and glutamate 370. Asparagine 179 contacts Mg(2+).

It belongs to the transketolase family. DXPS subfamily. As to quaternary structure, homodimer. It depends on Mg(2+) as a cofactor. Requires thiamine diphosphate as cofactor.

The catalysed reaction is D-glyceraldehyde 3-phosphate + pyruvate + H(+) = 1-deoxy-D-xylulose 5-phosphate + CO2. It functions in the pathway metabolic intermediate biosynthesis; 1-deoxy-D-xylulose 5-phosphate biosynthesis; 1-deoxy-D-xylulose 5-phosphate from D-glyceraldehyde 3-phosphate and pyruvate: step 1/1. Catalyzes the acyloin condensation reaction between C atoms 2 and 3 of pyruvate and glyceraldehyde 3-phosphate to yield 1-deoxy-D-xylulose-5-phosphate (DXP). The chain is 1-deoxy-D-xylulose-5-phosphate synthase from Xanthobacter autotrophicus (strain ATCC BAA-1158 / Py2).